The sequence spans 131 residues: Large ribosomal subunit protein bL17 (131 aa).

Belongs to the bacterial ribosomal protein bL17 family. In terms of assembly, part of the 50S ribosomal subunit. Contacts protein L32.

The protein is Large ribosomal subunit protein bL17 of Methylacidiphilum infernorum (isolate V4) (Methylokorus infernorum (strain V4)).